The sequence spans 20 residues: Superoxide dismutase [Mn], mitochondrial (20 aa).

Belongs to the iron/manganese superoxide dismutase family. In terms of assembly, homotetramer. The cofactor is Mn(2+).

The protein resides in the mitochondrion matrix. It carries out the reaction 2 superoxide + 2 H(+) = H2O2 + O2. In terms of biological role, destroys superoxide anion radicals which are normally produced within the cells and which are toxic to biological systems. This is Superoxide dismutase [Mn], mitochondrial (SODA) from Hordeum vulgare (Barley).